The chain runs to 158 residues: Acetolactate synthase small subunit (158 aa).

Positions 4-78 (ILSVLLENES…DVLRVIKVGQ (75 aa)) constitute an ACT domain.

Belongs to the acetolactate synthase small subunit family. In terms of assembly, dimer of large and small chains.

The catalysed reaction is 2 pyruvate + H(+) = (2S)-2-acetolactate + CO2. It participates in amino-acid biosynthesis; L-isoleucine biosynthesis; L-isoleucine from 2-oxobutanoate: step 1/4. It functions in the pathway amino-acid biosynthesis; L-valine biosynthesis; L-valine from pyruvate: step 1/4. The polypeptide is Acetolactate synthase small subunit (ilvH) (Buchnera aphidicola subsp. Schizaphis graminum (strain Sg)).